The sequence spans 86 residues: uncharacterized protein (86 aa).

The first 25 residues, M1–A25, serve as a signal peptide directing secretion.

This is an uncharacterized protein from Bacillus subtilis (strain 168).